Consider the following 1844-residue polypeptide: Non-structural replication polyprotein (1844 aa).

In terms of domain architecture, Alphavirus-like MT spans 58–219 (SGLGTSHHPH…NQPSDAHSWL (162 aa)). The disordered stretch occupies residues 571–739 (TAFLPFTPTT…QLLPAPLTND (169 aa)). Residues 631 to 641 (RAHQNSDLTLE) are compositionally biased toward polar residues. Residues 725–736 (PLQSSQLLPAPL) are compositionally biased toward low complexity. Residues 728–879 (SSQLLPAPLT…FSPGKRLLGS (152 aa)) form the OTU domain. A Peptidase C21 domain is found at 730 to 884 (QLLPAPLTND…RLLGSQPSAK (155 aa)). Cysteine 783 acts as the For protease activity in catalysis. The disordered stretch occupies residues 860 to 888 (ITHTTGPPSHFSPGKRLLGSQPSAKGHPS). The GPP flap signature appears at 865–867 (GPP). Histidine 869 (for protease activity) is an active-site residue. Positions 946–1103 (TGPTPKDAII…RLLPYIDMYC (158 aa)) constitute a (+)RNA virus helicase ATP-binding domain. 976–983 (GFAGCGKT) serves as a coordination point for a ribonucleoside 5'-triphosphate. In terms of domain architecture, (+)RNA virus helicase C-terminal spans 1104–1236 (WWSYRIPQCI…SLIIMDRYFP (133 aa)). In terms of domain architecture, RdRp catalytic spans 1572-1678 (TPKIANDYTA…DHPLPTRHDW (107 aa)).

Belongs to the Tymoviridae non-structural replication polyprotein family. Interacts with host ubiquitin. Specific enzymatic cleavages by the host yield mature proteins.

The protein localises to the host chloroplast envelope. It catalyses the reaction Thiol-dependent hydrolysis of ester, thioester, amide, peptide and isopeptide bonds formed by the C-terminal Gly of ubiquitin (a 76-residue protein attached to proteins as an intracellular targeting signal).. The enzyme catalyses RNA(n) + a ribonucleoside 5'-triphosphate = RNA(n+1) + diphosphate. Acts as a cysteine protease, methyltransferase and deubiquitinase. The cysteine protease activity cleaves the polyprotein giving rise to mature proteins. The protease has the ability to process substrates in trans. The methyltransferase domain is probably involved in viral RNA capping. The deubiquitylating activity counteracts the degradation of the viral polymerase mediated by the host ubiquitin-proteasome system. The polymerase is thus stabilized and infectivity is increased. Favors K63 poly-Ub linkage. Functionally, RNA-directed RNA polymerase is responsible for the replication and transcription of the genome. The chain is Non-structural replication polyprotein from Turnip yellow mosaic virus (isolate Australia).